The sequence spans 89 residues: Small ribosomal subunit protein uS15 (89 aa).

It belongs to the universal ribosomal protein uS15 family. Part of the 30S ribosomal subunit. Forms a bridge to the 50S subunit in the 70S ribosome, contacting the 23S rRNA.

In terms of biological role, one of the primary rRNA binding proteins, it binds directly to 16S rRNA where it helps nucleate assembly of the platform of the 30S subunit by binding and bridging several RNA helices of the 16S rRNA. Its function is as follows. Forms an intersubunit bridge (bridge B4) with the 23S rRNA of the 50S subunit in the ribosome. The sequence is that of Small ribosomal subunit protein uS15 from Buchnera aphidicola subsp. Acyrthosiphon pisum (strain 5A).